The sequence spans 471 residues: Argininosuccinate lyase (471 aa).

The protein belongs to the lyase 1 family. Argininosuccinate lyase subfamily.

The protein resides in the cytoplasm. The enzyme catalyses 2-(N(omega)-L-arginino)succinate = fumarate + L-arginine. It functions in the pathway amino-acid biosynthesis; L-arginine biosynthesis; L-arginine from L-ornithine and carbamoyl phosphate: step 3/3. This Parasynechococcus marenigrum (strain WH8102) protein is Argininosuccinate lyase.